Consider the following 260-residue polypeptide: Sphinganine C4-monooxygenase 1 (260 aa).

3 consecutive transmembrane segments (helical) span residues 11 to 31, 55 to 75, and 92 to 112; these read LLGT…YVAL, SVVK…ILLF, and FLVL…WQYF. The Fatty acid hydroxylase domain maps to 99 to 235; that stretch reads FVTAMIVLDT…FVMWDRILGT (137 aa). Positions 114 to 118 match the Histidine box-1 motif; that stretch reads HRYMH. Residues 128–132 carry the Histidine box-2 motif; sequence HSQHH. A Histidine box-3 motif is present at residues 207–213; it reads YHDIHHQ.

Belongs to the sterol desaturase family. It depends on Fe cation as a cofactor. In terms of tissue distribution, ubiquitous, with higher levels in flowers and roots.

It localises to the endoplasmic reticulum membrane. The catalysed reaction is a dihydroceramide + 2 Fe(II)-[cytochrome b5] + O2 + 2 H(+) = a phytoceramide + 2 Fe(III)-[cytochrome b5] + H2O. Its pathway is membrane lipid metabolism; sphingolipid biosynthesis. Its function is as follows. Involved in sphingolipid trihydroxy long-chain base (4-hydroxysphinganine) biosynthesis. Can use C18- and C20-sphinganine as substrates to produce C18- and C20-phytosphinganines (D-ribo-2-amino-1,3,4-trihydroxyoctadecane and -eicosane). This Arabidopsis thaliana (Mouse-ear cress) protein is Sphinganine C4-monooxygenase 1 (SBH1).